The following is a 152-amino-acid chain: D-aminoacyl-tRNA deacylase (152 aa).

A Gly-cisPro motif, important for rejection of L-amino acids motif is present at residues 137–138; sequence GP.

This sequence belongs to the DTD family. Homodimer.

The protein localises to the cytoplasm. It carries out the reaction glycyl-tRNA(Ala) + H2O = tRNA(Ala) + glycine + H(+). It catalyses the reaction a D-aminoacyl-tRNA + H2O = a tRNA + a D-alpha-amino acid + H(+). In terms of biological role, an aminoacyl-tRNA editing enzyme that deacylates mischarged D-aminoacyl-tRNAs. Also deacylates mischarged glycyl-tRNA(Ala), protecting cells against glycine mischarging by AlaRS. Acts via tRNA-based rather than protein-based catalysis; rejects L-amino acids rather than detecting D-amino acids in the active site. By recycling D-aminoacyl-tRNA to D-amino acids and free tRNA molecules, this enzyme counteracts the toxicity associated with the formation of D-aminoacyl-tRNA entities in vivo and helps enforce protein L-homochirality. The protein is D-aminoacyl-tRNA deacylase of Geobacter sulfurreducens (strain ATCC 51573 / DSM 12127 / PCA).